Here is a 78-residue protein sequence, read N- to C-terminus: Chondrosarcoma-associated gene 1 protein (78 aa).

The N-terminal stretch at 1–19 (MSATTACWPAFTVLGEARG) is a signal peptide. The disordered stretch occupies residues 35 to 78 (KMSRKPRASSPFSNNHPSTPKRFPRQPRREKGPVKEVPGTKGSP).

As to expression, expressed in chondrosarcoma, melanoma, cartilage and testis, but not in other normal tissues.

It localises to the cytoplasm. Its subcellular location is the cytoskeleton. The protein resides in the microtubule organizing center. It is found in the centrosome. The protein localises to the spindle pole. In terms of biological role, may play an important role in maintaining centrosome integrity during mitosis. This chain is Chondrosarcoma-associated gene 1 protein, found in Homo sapiens (Human).